A 320-amino-acid chain; its full sequence is Transcription factor NAI1 (320 aa).

Positions 53-105 (TKQMKTNNNMNSTSSSPSSSSSSGSRTSQVISFGSPDTKTNPVETSLNFSNQV) are disordered. Residues 58–80 (TNNNMNSTSSSPSSSSSSGSRTS) are compositionally biased toward low complexity. Over residues 81–105 (QVISFGSPDTKTNPVETSLNFSNQV) the composition is skewed to polar residues. The bHLH domain maps to 128–177 (HLLKEHVLAERKRRQKLNERLIALSALLPGLKKTDKATVLEDAIKHLKQL).

In terms of assembly, homodimer. In terms of tissue distribution, expressed constitutively in roots, leaves, stems, and flowers.

The protein localises to the nucleus. Transcription activator that regulates the expression of at least NAI2, PYK10 and PBP1. Required for and mediates the formation of endoplasmic reticulum bodies (ER bodies). Involved in the symbiotic interactions with the endophytes of the Sebacinaceae fungus family, such as Piriformospora indica and Sebacina. In Arabidopsis thaliana (Mouse-ear cress), this protein is Transcription factor NAI1 (NAI1).